The following is a 676-amino-acid chain: Beta-galactosidase BgaP (676 aa).

Arg112 contributes to the substrate binding site. Cys116 contacts Zn(2+). Substrate is bound at residue Asn150. Glu151 acts as the Proton donor in catalysis. Zn(2+) contacts are provided by Cys156, Cys158, and Cys161. Glu308 functions as the Nucleophile in the catalytic mechanism. Substrate contacts are provided by residues Trp316 and 356 to 359 (EKYH).

This sequence belongs to the glycosyl hydrolase 42 family. Homodimer.

The catalysed reaction is Hydrolysis of terminal non-reducing beta-D-galactose residues in beta-D-galactosides.. With respect to regulation, no activity lost during treatment with 100 mM EDTA after 2 hours, and the addition of 1 mM MgCl(2), 1 mM CaCl(2) or 1 mM MnCl(2) has no effect. However, the enzyme activity is inhibited by Zn(2+), Cu(2+), Ni(2+) and Co(2+) to different extents. Addition of Na(+) or K(+) slightly stimulates the enzyme activity at low concentrations and the optimal concentration is 250 mM. A further increase of their concentration of ions above the optimum value results in a decrease in enzyme activity. The enzyme is still active even in the presence of Na(+) or K(+) at a concentration up to 5 M. Hydrolyzes lactose, o-nitrophenyl-beta-D-galactopyranoside (ONPG), p-nitrophenyl-beta-D-galactopyranoside (PNPG), 5-bromo-4-chloro-3-indolyl-beta-D-galactopyranoside (X-gal), o-nitrophenyl-beta-D-fucopyranoside, p-nitrophenyl-beta-D-mannoside, o-nitrophenyl-beta-D-glucoside, p-nitrophenyl-beta-D-xyloside, p-nitrophenyl-beta-D-cellobioside, p-nitrophenyl-beta-D-arabinoside, p-nitrophenyl-beta-D-lactoside, p-nitrophenyl-beta-D-galacturonide, p-nitrophenyl-beta-D-glucuronide and p-nitrophenyl-alpha-D-galactoside with highest level of activity with ONPG as substrate, intermediate level of activity with PNPG and lower levels of activity with all other chromogenic nitrophenyl analogs. Able to hydrolyze 34% of milk lactose after 60 minutes at 5 degrees Celsius. This Planococcus sp. (strain L4) protein is Beta-galactosidase BgaP.